We begin with the raw amino-acid sequence, 215 residues long: LexA repressor (215 aa).

Positions 28-48 (RAEIAAELGFSSPNAAEEHLR) form a DNA-binding region, H-T-H motif. Residues Ser133 and Lys170 each act as for autocatalytic cleavage activity in the active site.

Belongs to the peptidase S24 family. As to quaternary structure, homodimer.

It carries out the reaction Hydrolysis of Ala-|-Gly bond in repressor LexA.. In terms of biological role, represses a number of genes involved in the response to DNA damage (SOS response), including recA and lexA. In the presence of single-stranded DNA, RecA interacts with LexA causing an autocatalytic cleavage which disrupts the DNA-binding part of LexA, leading to derepression of the SOS regulon and eventually DNA repair. The chain is LexA repressor from Burkholderia mallei (strain NCTC 10247).